A 110-amino-acid polypeptide reads, in one-letter code: Nucleotide-binding protein in fmt 3'region (110 aa).

8 to 15 (GLSGAGKT) contributes to the ATP binding site. 57 to 60 (DARA) contacts GTP.

It belongs to the RapZ-like family.

In terms of biological role, displays ATPase and GTPase activities. In Thermus thermophilus, this protein is Nucleotide-binding protein in fmt 3'region.